A 236-amino-acid polypeptide reads, in one-letter code: Reticulon-3 (236 aa).

A compositionally biased stretch (low complexity) spans 1–24 (MAEPSAATQSPSISSSSSGAEPSA). The disordered stretch occupies residues 1–31 (MAEPSAATQSPSISSSSSGAEPSAPGGGGSP). A2 is subject to N-acetylalanine. Over 2–67 (AEPSAATQSP…KKTGFVFGTT (66 aa)) the chain is Cytoplasmic. The residue at position 30 (S30) is a Phosphoserine. The Reticulon domain maps to 48-236 (VHDLIFWRDV…LPGIAKKKAE (189 aa)). The helical intramembrane region spans 68-91 (LIMLLSLAAFSVISVVSYLILALL). The Cytoplasmic portion of the chain corresponds to 92 to 151 (SVTISFRIYKSVIQAVQKSEEGHPFKAYLDVDITLSSEAFHNYMNAAMVHINRALKLIIR). Positions 152-172 (LFLVEDLVDSLKLAVFMWLMT) form an intramembrane region, helical. The Cytoplasmic segment spans residues 173–176 (YVGA). Positions 177–197 (VFNGITLLILAELLIFSVPIV) form an intramembrane region, helical. Residues 191-236 (IFSVPIVYEKYKTQIDHYVGIARDQTKSIVEKIQAKLPGIAKKKAE) form an interaction with FADD region. The Cytoplasmic portion of the chain corresponds to 198 to 236 (YEKYKTQIDHYVGIARDQTKSIVEKIQAKLPGIAKKKAE). Residues 204 to 206 (QID) form an interaction with BACE1 region.

Homodimer. Interacts with RTN4. Interacts with BACE1, BACE2, BCL2 and FADD. Interacts with ATL1 and ATL2. Interacts with TMEM33. Interacts with ZFYVE27 and with KIF5A in a ZFYVE27-dependent manner. Interacts with RIGI. Interacts with TRIM25.

It localises to the endoplasmic reticulum membrane. The protein localises to the golgi apparatus membrane. May be involved in membrane trafficking in the early secretory pathway. Inhibits BACE1 activity and amyloid precursor protein processing. May induce caspase-8 cascade and apoptosis. May favor BCL2 translocation to the mitochondria upon endoplasmic reticulum stress. Induces the formation of endoplasmic reticulum tubules. Acts also as an inflammation-resolving regulator by interacting with both TRIM25 and RIGI, subsequently impairing RIGI 'Lys-63'-linked polyubiquitination leading to IRF3 and NF-kappa-B inhibition. The sequence is that of Reticulon-3 (RTN3) from Pongo abelii (Sumatran orangutan).